We begin with the raw amino-acid sequence, 210 residues long: Peptidyl-tRNA hydrolase (210 aa).

Tyrosine 14 contacts tRNA. The active-site Proton acceptor is the histidine 19. Residues phenylalanine 64, asparagine 66, and asparagine 112 each contribute to the tRNA site.

This sequence belongs to the PTH family. As to quaternary structure, monomer.

It localises to the cytoplasm. The enzyme catalyses an N-acyl-L-alpha-aminoacyl-tRNA + H2O = an N-acyl-L-amino acid + a tRNA + H(+). Hydrolyzes ribosome-free peptidyl-tRNAs (with 1 or more amino acids incorporated), which drop off the ribosome during protein synthesis, or as a result of ribosome stalling. Its function is as follows. Catalyzes the release of premature peptidyl moieties from peptidyl-tRNA molecules trapped in stalled 50S ribosomal subunits, and thus maintains levels of free tRNAs and 50S ribosomes. The protein is Peptidyl-tRNA hydrolase of Methylorubrum extorquens (strain CM4 / NCIMB 13688) (Methylobacterium extorquens).